The sequence spans 938 residues: Isoleucine--tRNA ligase (938 aa).

Positions 58–68 match the 'HIGH' region motif; it reads PYANGNIHIGH. Glu562 serves as a coordination point for L-isoleucyl-5'-AMP. The short motif at 603–607 is the 'KMSKS' region element; sequence KMSKS. Lys606 contacts ATP. Cys901, Cys904, Cys921, and Cys924 together coordinate Zn(2+).

Belongs to the class-I aminoacyl-tRNA synthetase family. IleS type 1 subfamily. Monomer. The cofactor is Zn(2+).

It localises to the cytoplasm. The catalysed reaction is tRNA(Ile) + L-isoleucine + ATP = L-isoleucyl-tRNA(Ile) + AMP + diphosphate. Its function is as follows. Catalyzes the attachment of isoleucine to tRNA(Ile). As IleRS can inadvertently accommodate and process structurally similar amino acids such as valine, to avoid such errors it has two additional distinct tRNA(Ile)-dependent editing activities. One activity is designated as 'pretransfer' editing and involves the hydrolysis of activated Val-AMP. The other activity is designated 'posttransfer' editing and involves deacylation of mischarged Val-tRNA(Ile). This chain is Isoleucine--tRNA ligase, found in Actinobacillus pleuropneumoniae serotype 7 (strain AP76).